Here is a 327-residue protein sequence, read N- to C-terminus: Malate dehydrogenase (327 aa).

Residue 11-17 (GAAGQIS) participates in NAD(+) binding. 2 residues coordinate substrate: Arg92 and Arg98. NAD(+) contacts are provided by residues Asn105, Gln112, and 129-131 (VGN). The substrate site is built by Asn131 and Arg162. Residue His187 is the Proton acceptor of the active site.

Belongs to the LDH/MDH superfamily. MDH type 2 family.

It carries out the reaction (S)-malate + NAD(+) = oxaloacetate + NADH + H(+). In terms of biological role, catalyzes the reversible oxidation of malate to oxaloacetate. The protein is Malate dehydrogenase of Teredinibacter turnerae (strain ATCC 39867 / T7901).